Consider the following 451-residue polypeptide: Cindoxin reductase (451 aa).

Positions 24, 45, 53, and 89 each coordinate FAD. Residues 157 to 160 and 197 to 198 contribute to the NADP(+) site; these read NGNV and RS. FAD-binding positions include Trp-338 and 345–347; that span reads GGI. Gly-345 contributes to the NADP(+) binding site.

Belongs to the ferredoxin--NADP reductase type 1 family. It depends on FAD as a cofactor.

Functionally, involved in the degradation of cineol (eucalyptol). Catalyzes the reduction of cindoxin (CinC). This is Cindoxin reductase (cinB) from Citrobacter braakii.